The following is a 117-amino-acid chain: Large ribosomal subunit protein uL22 (117 aa).

This sequence belongs to the universal ribosomal protein uL22 family. As to quaternary structure, part of the 50S ribosomal subunit.

Its function is as follows. This protein binds specifically to 23S rRNA; its binding is stimulated by other ribosomal proteins, e.g. L4, L17, and L20. It is important during the early stages of 50S assembly. It makes multiple contacts with different domains of the 23S rRNA in the assembled 50S subunit and ribosome. In terms of biological role, the globular domain of the protein is located near the polypeptide exit tunnel on the outside of the subunit, while an extended beta-hairpin is found that lines the wall of the exit tunnel in the center of the 70S ribosome. The polypeptide is Large ribosomal subunit protein uL22 (Staphylococcus epidermidis (strain ATCC 35984 / DSM 28319 / BCRC 17069 / CCUG 31568 / BM 3577 / RP62A)).